Consider the following 130-residue polypeptide: Cyclin-dependent kinase 4 inhibitor B (130 aa).

4 ANK repeats span residues 5-34 (GSDAGLATAAARGQVETVRQLLEAGADPNA), 38-66 (FGRRPIQVMMMGSAQVAELLLLHGAEPNC), 71-100 (TLTRPVHDAAREGFLDTLMVLHKAGARLDV), and 104-130 (WGRLPVDLAEEQGHRDIARYLHAATGD). Phosphothreonine is present on T12.

Belongs to the CDKN2 cyclin-dependent kinase inhibitor family. Heterodimer of CDKN2B with CDK4 or CDK6. In terms of tissue distribution, expression abundant in lung, less abundant in testis, barely detectable in liver, and not detectable in neonatal kidney, adult kidney, brain, heart, or spleen.

Its function is as follows. Interacts strongly with CDK4 and CDK6. Potent inhibitor. Potential effector of TGF-beta induced cell cycle arrest. In Rattus norvegicus (Rat), this protein is Cyclin-dependent kinase 4 inhibitor B (Cdkn2b).